The primary structure comprises 171 residues: Large ribosomal subunit protein bL9 (171 aa).

It belongs to the bacterial ribosomal protein bL9 family.

Its function is as follows. Binds to the 23S rRNA. This chain is Large ribosomal subunit protein bL9, found in Rickettsia conorii (strain ATCC VR-613 / Malish 7).